The following is a 224-amino-acid chain: UPF0758 protein VV1_0825 (224 aa).

A disordered region spans residues M1 to G20. The region spanning A102 to I224 is the MPN domain. Zn(2+) is bound by residues H173, H175, and D186. Residues H173–D186 carry the JAMM motif motif.

The protein belongs to the UPF0758 family.

The protein is UPF0758 protein VV1_0825 of Vibrio vulnificus (strain CMCP6).